Reading from the N-terminus, the 1020-residue chain is C2 and GRAM domain-containing protein At1g03370 (1020 aa).

The 102-residue stretch at 1–102 (MKLQVRVVEA…ENQSLGTVWY (102 aa)) folds into the C2 1 domain. Ca(2+) is bound by residues Asp17, Asp23, Asp69, Asp71, and Asp77. Polar residues-rich tracts occupy residues 134-144 (TSSGDQTSASR) and 158-172 (TCAS…SSIP). The interval 134–172 (TSSGDQTSASRSPDLRLESPIDPSTCASPSRSDDASSIP) is disordered. Positions 249–421 (SGGVVVDQLF…LLAQSVKPVD (173 aa)) constitute a VASt 1 domain. A helical transmembrane segment spans residues 454–474 (FTVLSTFLIGIYVFVHIVFAI). One can recognise a C2 2 domain in the interval 517–635 (QARKQKGSDH…NISDLADVWV (119 aa)). Asp551, Asp557, Asp604, Phe605, and Asp606 together coordinate Ca(2+). Residues 689–752 (AFQKLFGLPQ…LWEDIEEIQV (64 aa)) enclose the GRAM domain. Residues 848–1010 (RFSEVFSLTL…MTFGFLEKEY (163 aa)) form the VASt 2 domain.

The cofactor is Ca(2+).

The protein resides in the membrane. The polypeptide is C2 and GRAM domain-containing protein At1g03370 (Arabidopsis thaliana (Mouse-ear cress)).